The chain runs to 236 residues: 2-C-methyl-D-erythritol 4-phosphate cytidylyltransferase (236 aa).

This sequence belongs to the IspD/TarI cytidylyltransferase family. IspD subfamily. As to quaternary structure, homodimer.

It carries out the reaction 2-C-methyl-D-erythritol 4-phosphate + CTP + H(+) = 4-CDP-2-C-methyl-D-erythritol + diphosphate. It functions in the pathway isoprenoid biosynthesis; isopentenyl diphosphate biosynthesis via DXP pathway; isopentenyl diphosphate from 1-deoxy-D-xylulose 5-phosphate: step 2/6. In terms of biological role, catalyzes the formation of 4-diphosphocytidyl-2-C-methyl-D-erythritol from CTP and 2-C-methyl-D-erythritol 4-phosphate (MEP). The sequence is that of 2-C-methyl-D-erythritol 4-phosphate cytidylyltransferase from Salmonella paratyphi A (strain ATCC 9150 / SARB42).